The following is a 554-amino-acid chain: 4-coumarate--CoA ligase 3 (554 aa).

ATP-binding residues include serine 188, serine 189, glycine 190, threonine 191, threonine 192, and lysine 196. (E)-4-coumaroyl-AMP-binding residues include tyrosine 238 and serine 242. Lysine 259 lines the CoA pocket. The segment at aspartate 261–glutamine 330 is SBD1. 5 residues coordinate (E)-4-coumaroyl-AMP: alanine 308, glutamine 330, glycine 331, threonine 335, and methionine 343. ATP contacts are provided by glutamine 330, glycine 331, and threonine 335. Residues glycine 331–tyrosine 398 form an SBD2 region. 2 residues coordinate ATP: aspartate 419 and arginine 434. 2 residues coordinate (E)-4-coumaroyl-AMP: lysine 436 and lysine 440. Positions 442 and 443 each coordinate CoA. An ATP-binding site is contributed by lysine 525.

It belongs to the ATP-dependent AMP-binding enzyme family. Requires Mg(2+) as cofactor. In terms of tissue distribution, expressed in root exodermis and epidermis cells, stem vascular cells, leaf developing vascular bundle cells and parenchyma cells, lemma, palea, stamens and pistil.

The catalysed reaction is (E)-ferulate + ATP + CoA = (E)-feruloyl-CoA + AMP + diphosphate. It catalyses the reaction (E)-4-coumarate + ATP + CoA = (E)-4-coumaroyl-CoA + AMP + diphosphate. The enzyme catalyses (E)-caffeate + ATP + CoA = (E)-caffeoyl-CoA + AMP + diphosphate. It carries out the reaction (E)-cinnamate + ATP + CoA = (E)-cinnamoyl-CoA + AMP + diphosphate. The catalysed reaction is (E)-ferulate + ATP + H(+) = (E)-feruloyl-AMP + diphosphate. It catalyses the reaction (E)-feruloyl-AMP + CoA = (E)-feruloyl-CoA + AMP + H(+). The enzyme catalyses (E)-4-coumarate + ATP + H(+) = (E)-4-coumaroyl-AMP + diphosphate. It carries out the reaction (E)-4-coumaroyl-AMP + CoA = (E)-4-coumaroyl-CoA + AMP + H(+). The catalysed reaction is (E)-caffeate + ATP + H(+) = (E)-caffeoyl-AMP + diphosphate. It catalyses the reaction (E)-caffeoyl-AMP + CoA = (E)-caffeoyl-CoA + AMP + H(+). The protein operates within phytoalexin biosynthesis; 3,4',5-trihydroxystilbene biosynthesis; 3,4',5-trihydroxystilbene from trans-4-coumarate: step 1/2. Its function is as follows. Involved in the phenylpropanoid metabolism by mediating the activation of a number of hydroxycinnamates for the biosynthesis of monolignols and other phenolic secondary metabolites. Catalyzes the formation of CoA esters of cinnamate, 4-coumarate, caffeate and ferulate. Is more efficient with substrates in the following order: ferulate &gt; 4-coumarate &gt; caffeate &gt; cinnamate. Possesses very high activity compared to 4CL1, 4CL2, 4CL4 and 4CL5. Cannot convert sinapate to its corresponding CoA ester. May play a role in the synthesis of lignin as well as other phenolic compounds. Follows a two-step reaction mechanism, wherein the carboxylate substrate first undergoes adenylation by ATP, followed by a thioesterification in the presence of CoA to yield the final CoA thioester. The polypeptide is 4-coumarate--CoA ligase 3 (Oryza sativa subsp. japonica (Rice)).